Consider the following 264-residue polypeptide: uncharacterized protein (264 aa).

The helical transmembrane segment at 182 to 198 threads the bilayer; sequence TVTGVSNALGFIIAALL.

To E.coli YjiC.

It is found in the membrane. This is an uncharacterized protein from Escherichia coli (strain K12).